We begin with the raw amino-acid sequence, 277 residues long: Ribosomal RNA small subunit methyltransferase A (277 aa).

Residues Asn-18, Leu-20, Gly-45, Glu-66, Asp-89, and Asn-110 each coordinate S-adenosyl-L-methionine.

The protein belongs to the class I-like SAM-binding methyltransferase superfamily. rRNA adenine N(6)-methyltransferase family. RsmA subfamily.

Its subcellular location is the cytoplasm. The enzyme catalyses adenosine(1518)/adenosine(1519) in 16S rRNA + 4 S-adenosyl-L-methionine = N(6)-dimethyladenosine(1518)/N(6)-dimethyladenosine(1519) in 16S rRNA + 4 S-adenosyl-L-homocysteine + 4 H(+). Functionally, specifically dimethylates two adjacent adenosines (A1518 and A1519) in the loop of a conserved hairpin near the 3'-end of 16S rRNA in the 30S particle. May play a critical role in biogenesis of 30S subunits. This chain is Ribosomal RNA small subunit methyltransferase A, found in Cupriavidus taiwanensis (strain DSM 17343 / BCRC 17206 / CCUG 44338 / CIP 107171 / LMG 19424 / R1) (Ralstonia taiwanensis (strain LMG 19424)).